The sequence spans 1798 residues: Non-reducing polyketide synthase nscA (1798 aa).

Positions 25-256 (RRLDQHSKDR…PLPVYDGLCH (232 aa)) are N-terminal acylcarrier protein transacylase domain (SAT). The Ketosynthase family 3 (KS3) domain occupies 392 to 825 (SSKLAIVGMA…GGNTTLLLED (434 aa)). Residues cysteine 565, histidine 700, and histidine 743 each act as for beta-ketoacyl synthase activity in the active site. Positions 931–1224 (FTGQGAYYHG…LVRSMIPSAP (294 aa)) are malonyl-CoA:ACP transacylase (MAT) domain. The interval 1322–1458 (HQITAETVRT…ATILFEDPGA (137 aa)) is N-terminal hotdog fold. Residues 1322–1632 (HQITAETVRT…FRRVPRLLMD (311 aa)) enclose the PKS/mFAS DH domain. Residue histidine 1354 is the Proton acceptor; for dehydratase activity of the active site. The segment at 1390 to 1628 (HMNLTDVEVL…GMIRFRRVPR (239 aa)) is product template (PT) domain. The segment at 1486 to 1632 (ASRLSKPLAY…FRRVPRLLMD (147 aa)) is C-terminal hotdog fold. The Proton donor; for dehydratase activity role is filled by aspartate 1543. The interval 1695–1721 (LLATSSGDSTPKEPPIVTPAESERAGP) is disordered. The Carrier domain maps to 1721–1798 (PVDNNMISQC…EMTAWIEEYC (78 aa)). O-(pantetheine 4'-phosphoryl)serine is present on serine 1758.

Pantetheine 4'-phosphate serves as cofactor.

It participates in secondary metabolite biosynthesis. In terms of biological role, non-reducing polyketide synthase; part of the gene cluster that mediates the biosynthesis of neosartoricin B, a prenylated anthracenone that probably exhibits T-cell antiproliferative activity, suggestive of a physiological role as an immunosuppressive agent. The non-reducing polyketide synthase nscA probably synthesizes and cyclizes the decaketide backbone. The hydrolase nscB then mediates the product release through hydrolysis followed by spontaneous decarboxylation. The prenyltransferase nscD catalyzes the addition of the dimethylallyl group to the aromatic C5. The FAD-dependent monooxygenase nscC is then responsible for the stereospecific hydroxylation at C2. Neosartoricin B can be converted into two additional compounds neosartoricins C and D. Neosartoricin C is a spirocyclic compound that is cyclized through the attack of C3 hydroxyl on C14, followed by dehydration. On the other hand, neosartoricin D is a further cyclized compound in which attack of C2 on C14 in neosartoricin C results in the formation of the acetal-containing dioxabicyclo-octanone ring. Both of these compounds are novel and possibly represent related metabolites of the gene cluster. The polypeptide is Non-reducing polyketide synthase nscA (Trichophyton rubrum (strain ATCC MYA-4607 / CBS 118892) (Athlete's foot fungus)).